Consider the following 267-residue polypeptide: Putative carbamate hydrolase RutD (267 aa).

Residues 23–139 (VVLLSSGLGG…IQRCFDTRIH (117 aa)) enclose the AB hydrolase-1 domain.

The protein belongs to the AB hydrolase superfamily. Hydrolase RutD family.

The enzyme catalyses carbamate + 2 H(+) = NH4(+) + CO2. Functionally, involved in pyrimidine catabolism. May facilitate the hydrolysis of carbamate, a reaction that can also occur spontaneously. This chain is Putative carbamate hydrolase RutD, found in Caulobacter segnis (strain ATCC 21756 / DSM 7131 / JCM 7823 / NBRC 15250 / LMG 17158 / TK0059) (Mycoplana segnis).